The chain runs to 341 residues: Serine/threonine-protein kinase PDIK1L (341 aa).

One can recognise a Protein kinase domain in the interval 8–334; that stretch reads YDLIREVGRG…LELRLVQIAF (327 aa). Residues 14-22 and lysine 37 contribute to the ATP site; that span reads VGRGSYGVV. Aspartate 164 (proton acceptor) is an active-site residue.

This sequence belongs to the protein kinase superfamily. Ser/Thr protein kinase family. As to expression, expressed in liver, kidney, pancreas, spleen, thymus and prostate.

Its subcellular location is the nucleus. It carries out the reaction L-seryl-[protein] + ATP = O-phospho-L-seryl-[protein] + ADP + H(+). It catalyses the reaction L-threonyl-[protein] + ATP = O-phospho-L-threonyl-[protein] + ADP + H(+). This chain is Serine/threonine-protein kinase PDIK1L (PDIK1L), found in Homo sapiens (Human).